The chain runs to 430 residues: Evolutionarily conserved signaling intermediate in Toll pathway, mitochondrial (430 aa).

A mitochondrion-targeting transit peptide spans 1–48 (MSWVQATLLARGLCRAWGGICRAALPGTSISQVPRQLPRGLHCSAAPH). The segment at 41 to 66 (LHCSAAPHSSEQSLVSSPPEPRQRPT) is disordered. The span at 47–56 (PHSSEQSLVS) shows a compositional bias: polar residues. Residue K372 forms a Glycyl lysine isopeptide (Lys-Gly) (interchain with G-Cter in ubiquitin) linkage. Positions 400-430 (LHTSSAGLEEPPPPEDHEEDDSRQRQQQGQS) are disordered. Over residues 411–420 (PPPEDHEEDD) the composition is skewed to acidic residues.

The protein belongs to the ECSIT family. In terms of assembly, interacts with MAP3K1, SMAD4 and TRAF6. Interacts with SMAD1 only after BMP4-treatment. Part of the mitochondrial complex I assembly/MCIA complex that comprises at least the core subunits TMEM126B, NDUFAF1, ECSIT and ACAD9 and complement subunits such as COA1 and TMEM186. Interacts with NDUFAF1. Interacts with ACAD9. Interacts with TRIM59. Interacts with TMEM70 and TMEM242. Interacts (when ubiquitinated) with NF-kappa-B subunits RELA and NFKB1. Interacts with RIGI, IFIT1 and MAVS; these interactions promote RLR-mediated type I IFN induction. Interacts with SQSTM1; this interaction inhibits TLR4 signaling via functional regulation of the TRAF6-ECSIT complex. Interacts with cereblon/CRBN; this interaction inhibits the ubiquitination of ECSIT. In terms of processing, ubiquitinated on Lys-372; leading to translocation in the nucleus together with RELA and NFKB1 and expression of NF-kappa-B-dependent genes.

The protein localises to the cytoplasm. It is found in the nucleus. The protein resides in the mitochondrion. In terms of biological role, adapter protein that plays a role in different signaling pathways including TLRs and IL-1 pathways or innate antiviral induction signaling. Plays a role in the activation of NF-kappa-B by forming a signal complex with TRAF6 and TAK1/MAP3K7 to activate TAK1/MAP3K7 leading to activation of IKKs. Once ubiquitinated, interacts with the dissociated RELA and NFKB1 proteins and translocates to the nucleus where it induces NF-kappa-B-dependent gene expression. Plays a role in innate antiviral immune response by bridging the pattern recognition receptors RIGI and MDA5/IFIT1 to the MAVS complex at the mitochondrion. Promotes proteolytic activation of MAP3K1. Involved in the BMP signaling pathway. Required for normal embryonic development. As part of the MCIA complex, involved in the assembly of the mitochondrial complex I. The chain is Evolutionarily conserved signaling intermediate in Toll pathway, mitochondrial from Macaca fascicularis (Crab-eating macaque).